The sequence spans 437 residues: UDP-N-acetylmuramate--L-alanine ligase (437 aa).

114-120 (GTHGKTS) contacts ATP.

This sequence belongs to the MurCDEF family.

It is found in the cytoplasm. It carries out the reaction UDP-N-acetyl-alpha-D-muramate + L-alanine + ATP = UDP-N-acetyl-alpha-D-muramoyl-L-alanine + ADP + phosphate + H(+). Its pathway is cell wall biogenesis; peptidoglycan biosynthesis. Cell wall formation. The chain is UDP-N-acetylmuramate--L-alanine ligase from Lactobacillus johnsonii (strain CNCM I-12250 / La1 / NCC 533).